The chain runs to 113 residues: Large ribosomal subunit protein bL19 (113 aa).

The protein belongs to the bacterial ribosomal protein bL19 family.

Functionally, this protein is located at the 30S-50S ribosomal subunit interface and may play a role in the structure and function of the aminoacyl-tRNA binding site. The sequence is that of Large ribosomal subunit protein bL19 from Corynebacterium diphtheriae (strain ATCC 700971 / NCTC 13129 / Biotype gravis).